Reading from the N-terminus, the 194-residue chain is 7-methyl-GTP pyrophosphatase (194 aa).

The active-site Proton acceptor is Asp67.

This sequence belongs to the Maf family. YceF subfamily. Requires a divalent metal cation as cofactor.

It is found in the cytoplasm. The catalysed reaction is N(7)-methyl-GTP + H2O = N(7)-methyl-GMP + diphosphate + H(+). Its function is as follows. Nucleoside triphosphate pyrophosphatase that hydrolyzes 7-methyl-GTP (m(7)GTP). May have a dual role in cell division arrest and in preventing the incorporation of modified nucleotides into cellular nucleic acids. In Pseudoalteromonas atlantica (strain T6c / ATCC BAA-1087), this protein is 7-methyl-GTP pyrophosphatase.